Consider the following 325-residue polypeptide: Ferrochelatase (325 aa).

Residues His195 and Glu276 each contribute to the Fe cation site.

It belongs to the ferrochelatase family.

The protein localises to the cytoplasm. It carries out the reaction heme b + 2 H(+) = protoporphyrin IX + Fe(2+). The protein operates within porphyrin-containing compound metabolism; protoheme biosynthesis; protoheme from protoporphyrin-IX: step 1/1. Functionally, catalyzes the ferrous insertion into protoporphyrin IX. In Methylococcus capsulatus (strain ATCC 33009 / NCIMB 11132 / Bath), this protein is Ferrochelatase.